Reading from the N-terminus, the 728-residue chain is Meiotic sister-chromatid recombination protein 3 (728 aa).

Disordered stretches follow at residues 33-171 (QLSA…GRTQ), 236-261 (NETD…LNVE), 300-335 (PTHQ…EAEA), 363-403 (SDNA…VKSN), 422-454 (SAPH…ANTG), 495-514 (VGVS…QHYL), and 561-728 (YGYQ…KSSR). Over residues 35-46 (SAAAASAASAAS) the composition is skewed to low complexity. Residues 48–58 (DRTNYSRSHSL) show a composition bias toward polar residues. Phosphoserine occurs at positions 57 and 64. Low complexity predominate over residues 80–93 (STSSAAPPTSRAAA). 3 stretches are compositionally biased toward polar residues: residues 95–106 (QYSQKTYSLRSQ), 118–132 (YTTN…TSGA), and 140–171 (KNKS…GRTQ). 3 positions are modified to phosphoserine: Ser127, Ser151, and Ser155. A compositionally biased stretch (basic and acidic residues) spans 251–261 (HLQDDSELNVE). The segment covering 309-326 (IHNKRKQASTTRRKKRPP) has biased composition (basic residues). Ser363 is modified (phosphoserine). Polar residues-rich tracts occupy residues 363–373 (SDNASAPLGSN) and 385–403 (TLRS…VKSN). Residues 590-634 (EGVTTAKPSSNEGVMTNPVVTDSPSPLQQQIDSTTASSNGQSQGN) are compositionally biased toward polar residues. Residues 635–646 (VPTSAVASTTRT) show a composition bias toward low complexity. Thr646 is modified (phosphothreonine). 3 stretches are compositionally biased toward polar residues: residues 654-668 (NLKS…QTPQ), 675-684 (DPTTSSTNEL), and 691-708 (MVTS…TQDP). Ser660 carries the post-translational modification Phosphoserine. Residues 711 to 728 (KHKKSSFFTKLFKKKSSR) are compositionally biased toward basic residues.

It is found in the cell membrane. Its function is as follows. May be involved in the control of meiotic sister-chromatid recombination. This chain is Meiotic sister-chromatid recombination protein 3 (MSC3), found in Saccharomyces cerevisiae (strain ATCC 204508 / S288c) (Baker's yeast).